The primary structure comprises 247 residues: 2,3-bisphosphoglycerate-dependent phosphoglycerate mutase (247 aa).

Substrate-binding positions include 8 to 15 (RHGESTWN), 21 to 22 (TG), Arg60, 87 to 90 (ERHY), Lys98, 114 to 115 (RR), and 183 to 184 (GN). His9 serves as the catalytic Tele-phosphohistidine intermediate. Glu87 acts as the Proton donor/acceptor in catalysis.

The protein belongs to the phosphoglycerate mutase family. BPG-dependent PGAM subfamily. Homodimer.

It catalyses the reaction (2R)-2-phosphoglycerate = (2R)-3-phosphoglycerate. It participates in carbohydrate degradation; glycolysis; pyruvate from D-glyceraldehyde 3-phosphate: step 3/5. Functionally, catalyzes the interconversion of 2-phosphoglycerate and 3-phosphoglycerate. This chain is 2,3-bisphosphoglycerate-dependent phosphoglycerate mutase, found in Paracidovorax citrulli (strain AAC00-1) (Acidovorax citrulli).